The primary structure comprises 207 residues: Superoxide dismutase [Mn] (207 aa).

4 residues coordinate Mn(2+): His-28, His-76, Asp-160, and His-164.

The protein belongs to the iron/manganese superoxide dismutase family. It depends on Mn(2+) as a cofactor.

The enzyme catalyses 2 superoxide + 2 H(+) = H2O2 + O2. In terms of biological role, destroys superoxide anion radicals which are normally produced within the cells and which are toxic to biological systems. This Mycobacterium avium protein is Superoxide dismutase [Mn] (sodA).